Reading from the N-terminus, the 331-residue chain is MTISLEADLKSLQQSAQAAISGCDDLDGLDKLRVQYLGKKGELSLILKGMGKLSAEERPKFGAIANEVKEALQHDLESRKANLQNAAIEAQLAAETLDVTMAGSYRPQGRRHPLNSTVDRVLDIFVGLGYTVATGPQVETDYYNFEALNIPADHPARDMQDTFFLKDGRLLRTHTSPVQIRYMEKHDPPIRIVAPGRVYRRDTVDATHSAVFHQVELLAIDKGLAFTHLKGTIQAFIKQMFGEALPIRFRASYFPFTEPSAEVDVQWQGKWLEVMGCGMVDPNVMEAVGYDPEVYTGFAAGFGVERFAMVLHQIDDIRRLYNSDLRFLRQF.

Mg(2+) is bound at residue Glu258.

The protein belongs to the class-II aminoacyl-tRNA synthetase family. Phe-tRNA synthetase alpha subunit type 1 subfamily. Tetramer of two alpha and two beta subunits. Mg(2+) serves as cofactor.

It localises to the cytoplasm. The enzyme catalyses tRNA(Phe) + L-phenylalanine + ATP = L-phenylalanyl-tRNA(Phe) + AMP + diphosphate + H(+). The chain is Phenylalanine--tRNA ligase alpha subunit (pheS) from Synechocystis sp. (strain ATCC 27184 / PCC 6803 / Kazusa).